The chain runs to 468 residues: Intramembrane protease 2 (468 aa).

Residues 1–22 (MAEAATEIPPTASNVTVFTFEE) are Lumenal-facing. A glycan (N-linked (GlcNAc...) asparagine) is linked at Asn14. A helical membrane pass occupies residues 23–43 (QATSSLALYGMSILCIIIGSI). Residues 44-70 (RSAQYIRTNIDKKRLIEGSITMREARK) are Cytoplasmic-facing. Residues 71–91 (FPISASLVLFGLYLFFKPAAE) form a helical membrane-spanning segment. At 92 to 168 (RFLWVARVFQ…TNLPTIQKAE (77 aa)) the chain is on the lumenal side. N-linked (GlcNAc...) asparagine glycans are attached at residues Asn114 and Asn123. A helical membrane pass occupies residues 169 to 189 (CMQLLTFLICFEGVNAFASLL). Over 190-247 (KPFVTAFLKKMPLVPSFLRFNAPYLFSLKKGNKEMEEGDIEDAKKKETEYLFKIDFDR) the chain is Cytoplasmic. The helical transmembrane segment at 248 to 265 (YDIIALLMCSPILISHLL) threads the bilayer. Residues 266 to 267 (KR) are Lumenal-facing. A helical transmembrane segment spans residues 268–284 (HWITNNIIGVSFSILGI). At 285–296 (ERLHLASFKAGS) the chain is on the cytoplasmic side. A helical membrane pass occupies residues 297–317 (LLLVGLFFYDIFWVFGTDVMT). The active site involves Asp306. Residues 318 to 343 (SVAKGIDAPILLQFPQDIYRNGIMEA) are Lumenal-facing. A helical transmembrane segment spans residues 344 to 364 (SKHSMLGLGDIVIPGIFIALL). Asp353 is a catalytic residue. The Cytoplasmic segment spans residues 365–388 (RRFDYRVVQTTAESKAPQGSLKGR). A helical transmembrane segment spans residues 389 to 409 (YYFVVTVVAYMAGLFITMAVM). The Lumenal portion of the chain corresponds to 410–415 (HHFKAA). A helical membrane pass occupies residues 416-436 (QPALLYLVPCCLFVPLLLAVI). Residues 417 to 419 (PAL) carry the PAL motif. Residues 437–468 (RGELSALWNYDESRHVDNEENRKKVDSGKKNN) lie on the Cytoplasmic side of the membrane.

Belongs to the peptidase A22B family.

Its subcellular location is the membrane. The protein resides in the endoplasmic reticulum membrane. Acts as intramembrane protease. In larvae, required for the complete shedding of the cuticle during molting, possibly by regulating cholesterol uptake via lrp-1. Involved in embryonic and larval development. This chain is Intramembrane protease 2, found in Caenorhabditis elegans.